A 337-amino-acid polypeptide reads, in one-letter code: RNA 3'-terminal phosphate cyclase (337 aa).

ATP-binding positions include Gln-101 and 282-285 (HMSD). Catalysis depends on His-306, which acts as the Tele-AMP-histidine intermediate.

This sequence belongs to the RNA 3'-terminal cyclase family. Type 1 subfamily.

The protein localises to the cytoplasm. It catalyses the reaction a 3'-end 3'-phospho-ribonucleotide-RNA + ATP = a 3'-end 2',3'-cyclophospho-ribonucleotide-RNA + AMP + diphosphate. Catalyzes the conversion of 3'-phosphate to a 2',3'-cyclic phosphodiester at the end of RNA. The mechanism of action of the enzyme occurs in 3 steps: (A) adenylation of the enzyme by ATP; (B) transfer of adenylate to an RNA-N3'P to produce RNA-N3'PP5'A; (C) and attack of the adjacent 2'-hydroxyl on the 3'-phosphorus in the diester linkage to produce the cyclic end product. The biological role of this enzyme is unknown but it is likely to function in some aspects of cellular RNA processing. In Saccharolobus islandicus (strain M.16.27) (Sulfolobus islandicus), this protein is RNA 3'-terminal phosphate cyclase.